Consider the following 267-residue polypeptide: uncharacterized protein (267 aa).

The stretch at 50–90 (PGLNAVTASKFSPDGRWLLNIADGSGYVQLWDTAKGERVKT) is one WD repeat.

This is an uncharacterized protein from Deinococcus radiodurans (strain ATCC 13939 / DSM 20539 / JCM 16871 / CCUG 27074 / LMG 4051 / NBRC 15346 / NCIMB 9279 / VKM B-1422 / R1).